The sequence spans 721 residues: DNA ligase (721 aa).

NAD(+)-binding positions include 39–43, 89–90, and Glu123; these read DAEYD and SL. Lys125 acts as the N6-AMP-lysine intermediate in catalysis. Residues Arg146, Glu186, Lys302, and Lys326 each contribute to the NAD(+) site. Zn(2+) is bound by residues Cys418, Cys421, Cys436, and Cys442. Positions 556–588 are disordered; sequence QASSAAREGEPANADGAYDPATVTPDSDTAGAE. The region spanning 641 to 721 is the BRCT domain; sequence TKDSAVAGKT…AWAEIVRQAG (81 aa).

Belongs to the NAD-dependent DNA ligase family. LigA subfamily. Requires Mg(2+) as cofactor. It depends on Mn(2+) as a cofactor.

The catalysed reaction is NAD(+) + (deoxyribonucleotide)n-3'-hydroxyl + 5'-phospho-(deoxyribonucleotide)m = (deoxyribonucleotide)n+m + AMP + beta-nicotinamide D-nucleotide.. Functionally, DNA ligase that catalyzes the formation of phosphodiester linkages between 5'-phosphoryl and 3'-hydroxyl groups in double-stranded DNA using NAD as a coenzyme and as the energy source for the reaction. It is essential for DNA replication and repair of damaged DNA. This is DNA ligase from Novosphingobium aromaticivorans (strain ATCC 700278 / DSM 12444 / CCUG 56034 / CIP 105152 / NBRC 16084 / F199).